The following is a 373-amino-acid chain: CXADR-like membrane protein (373 aa).

An N-terminal signal peptide occupies residues 1 to 17; the sequence is MSLFFLWLVSYYVGTLG. Ig-like C2-type domains are found at residues 18-126 and 134-223; these read THTE…VILK and PKCE…VRVT. Residues 18-234 lie on the Extracellular side of the membrane; that stretch reads THTEIKRVAE…QYVQSIGMVA (217 aa). 2 disulfide bridges follow: C34–C110 and C152–C207. N-linked (GlcNAc...) asparagine glycosylation is found at N73 and N196. Residues 235-255 traverse the membrane as a helical segment; the sequence is GAVTGIVAGALLIFLLIWLLI. Residues 256-373 are Cytoplasmic-facing; that stretch reads RRKSKDRYEE…PSQSKAFQTV (118 aa). The segment covering 263–280 has biased composition (basic and acidic residues); the sequence is YEEEDRPNEIREDAEAPR. Residues 263 to 373 form a disordered region; the sequence is YEEEDRPNEI…PSQSKAFQTV (111 aa). 3 stretches are compositionally biased toward low complexity: residues 287-313, 321-332, and 353-363; these read SSSS…ASRS, AAPQQPGLAPQA, and LTKAETTLSTT. Residues 364–373 show a composition bias toward polar residues; the sequence is PSQSKAFQTV.

Predominantly expressed in epithelial cells within different tissues and in the white adipose tissue. Expressed at high levels in the heart and brain, at intermediate levels in the lung, skeletal muscle, kidney and testis and at low levels in the liver and spleen.

It is found in the cell junction. Its subcellular location is the tight junction. The protein localises to the cell membrane. Functionally, may be involved in the cell-cell adhesion. May play a role in adipocyte differentiation and development of obesity. Is required for normal small intestine development. The sequence is that of CXADR-like membrane protein (Clmp) from Mus musculus (Mouse).